Consider the following 61-residue polypeptide: Photosystem II reaction center protein K (61 aa).

A propeptide spanning residues 1–24 (MLNIFSLICICLHSTLYSSSFFLA) is cleaved from the precursor. The helical transmembrane segment at 36-56 (IVDFMPVIPLLFFLLAFVWQA) threads the bilayer.

It belongs to the PsbK family. PSII is composed of 1 copy each of membrane proteins PsbA, PsbB, PsbC, PsbD, PsbE, PsbF, PsbH, PsbI, PsbJ, PsbK, PsbL, PsbM, PsbT, PsbX, PsbY, PsbZ, Psb30/Ycf12, at least 3 peripheral proteins of the oxygen-evolving complex and a large number of cofactors. It forms dimeric complexes.

The protein localises to the plastid. The protein resides in the chloroplast thylakoid membrane. One of the components of the core complex of photosystem II (PSII). PSII is a light-driven water:plastoquinone oxidoreductase that uses light energy to abstract electrons from H(2)O, generating O(2) and a proton gradient subsequently used for ATP formation. It consists of a core antenna complex that captures photons, and an electron transfer chain that converts photonic excitation into a charge separation. This chain is Photosystem II reaction center protein K, found in Eucalyptus globulus subsp. globulus (Tasmanian blue gum).